A 169-amino-acid polypeptide reads, in one-letter code: GTP-dependent dephospho-CoA kinase (169 aa).

Residues Asp-45, Asp-64, Lys-66, and Glu-121 each coordinate GTP.

This sequence belongs to the GTP-dependent DPCK family.

The catalysed reaction is 3'-dephospho-CoA + GTP = GDP + CoA + H(+). The protein operates within cofactor biosynthesis; coenzyme A biosynthesis. Catalyzes the GTP-dependent phosphorylation of the 3'-hydroxyl group of dephosphocoenzyme A to form coenzyme A (CoA). This Methanosphaera stadtmanae (strain ATCC 43021 / DSM 3091 / JCM 11832 / MCB-3) protein is GTP-dependent dephospho-CoA kinase.